An 834-amino-acid polypeptide reads, in one-letter code: Putative COX1/OXI3 intron 1 protein (834 aa).

The segment at 162 to 188 (MKDTNNTKGNTKSEGSTERGNSGVDRG) is disordered. The segment covering 167–181 (NTKGNTKSEGSTERG) has biased composition (polar residues). One can recognise a Reverse transcriptase domain in the interval 296–577 (LSNELGTGKF…TPARFLGYNI (282 aa)).

It localises to the mitochondrion. This chain is Putative COX1/OXI3 intron 1 protein (AI1), found in Saccharomyces cerevisiae (strain ATCC 204508 / S288c) (Baker's yeast).